Reading from the N-terminus, the 358-residue chain is Dynein axonemal assembly factor 10 (358 aa).

WD repeat units lie at residues 64 to 106 (EKPK…TPVY), 116 to 155 (NCID…TPVA), 163 to 206 (ETKR…VRWE), 208 to 250 (NIKN…PSKG), 258 to 298 (AHKS…QRSR), and 320 to 358 (LSTQ…LNKL).

In terms of assembly, interacts with PIH1D1; the interaction associates DNAAF10 with the R2TP complex. Interacts with several dynein axonemal assembly factors.

The protein resides in the dynein axonemal particle. In terms of biological role, key assembly factor specifically required for the stability of axonemal dynein heavy chains in cytoplasm. The sequence is that of Dynein axonemal assembly factor 10 (dnaaf10) from Xenopus tropicalis (Western clawed frog).